Here is a 152-residue protein sequence, read N- to C-terminus: CMT1A duplicated region transcript 4 protein (152 aa).

Residues 1–11 show a composition bias toward basic and acidic residues; it reads MDARRMKKEEG. Disordered stretches follow at residues 1-23 and 60-89; these read MDAR…RKLL and ERPW…GKAV. Positions 65–74 are enriched in polar residues; that stretch reads SRQNKPSSVI.

Expressed in fetal skeletal muscle and kidney.

This Homo sapiens (Human) protein is CMT1A duplicated region transcript 4 protein (CDRT4).